Reading from the N-terminus, the 383-residue chain is 1-deoxy-D-xylulose 5-phosphate reductoisomerase (383 aa).

Positions 10, 11, 12, 13, 36, 37, 38, and 122 each coordinate NADPH. 1-deoxy-D-xylulose 5-phosphate is bound at residue Lys-123. Glu-124 is a binding site for NADPH. Asp-148 lines the Mn(2+) pocket. 1-deoxy-D-xylulose 5-phosphate is bound by residues Ser-149, Glu-150, Ser-174, and His-197. Residue Glu-150 participates in Mn(2+) binding. Gly-203 provides a ligand contact to NADPH. Ser-210, Asn-215, Lys-216, and Glu-219 together coordinate 1-deoxy-D-xylulose 5-phosphate. Glu-219 serves as a coordination point for Mn(2+).

Belongs to the DXR family. Mg(2+) serves as cofactor. The cofactor is Mn(2+).

The enzyme catalyses 2-C-methyl-D-erythritol 4-phosphate + NADP(+) = 1-deoxy-D-xylulose 5-phosphate + NADPH + H(+). The protein operates within isoprenoid biosynthesis; isopentenyl diphosphate biosynthesis via DXP pathway; isopentenyl diphosphate from 1-deoxy-D-xylulose 5-phosphate: step 1/6. In terms of biological role, catalyzes the NADPH-dependent rearrangement and reduction of 1-deoxy-D-xylulose-5-phosphate (DXP) to 2-C-methyl-D-erythritol 4-phosphate (MEP). This Bacillus subtilis (strain 168) protein is 1-deoxy-D-xylulose 5-phosphate reductoisomerase.